The following is a 349-amino-acid chain: Protein-glutamate methylesterase/protein-glutamine glutaminase (349 aa).

The 118-residue stretch at 5-122 (RVLSVDDSAL…REGMLAYNEM (118 aa)) folds into the Response regulatory domain. D56 is modified (4-aspartylphosphate). In terms of domain architecture, CheB-type methylesterase spans 152–344 (LLSSEKLIAI…QQMLAKISAG (193 aa)). Catalysis depends on residues S164, H190, and D286.

This sequence belongs to the CheB family. Interacts with CheA. Binds to a C-terminal pentapeptide sequence carried by certain receptors. Post-translationally, phosphorylated by CheA. Phosphorylation of the N-terminal regulatory domain activates the methylesterase activity.

Its subcellular location is the cytoplasm. It carries out the reaction [protein]-L-glutamate 5-O-methyl ester + H2O = L-glutamyl-[protein] + methanol + H(+). It catalyses the reaction L-glutaminyl-[protein] + H2O = L-glutamyl-[protein] + NH4(+). Methylesterase activity is activated via phosphorylation in response to negative chemotactic stimuli and is inhibited in the presence of attractants. Activation requires both CheA and CheW. In terms of biological role, involved in chemotaxis. Part of a chemotaxis signal transduction system that modulates chemotaxis in response to various stimuli. Catalyzes the demethylation of specific methylglutamate residues introduced into the chemoreceptors (methyl-accepting chemotaxis proteins or MCP) by CheR. Also mediates the irreversible deamidation of specific glutamine residues to glutamic acid. Catalyzes its own deactivation by removing the activating phosphoryl group. This chain is Protein-glutamate methylesterase/protein-glutamine glutaminase, found in Escherichia coli (strain K12).